Here is an 80-residue protein sequence, read N- to C-terminus: Defensin-like protein 2 (80 aa).

Positions 1 to 29 (MAKFASIIVLLFVALVVFAAFEEPTMVEA) are cleaved as a signal peptide. Pyrrolidone carboxylic acid is present on Gln-30. Disulfide bonds link Cys-33–Cys-80, Cys-44–Cys-65, Cys-50–Cys-74, and Cys-54–Cys-76.

It belongs to the DEFL family.

Its subcellular location is the secreted. Functionally, possesses antifungal activity sensitive to inorganic cations. Induces potential changes in fungal membranes and increased K(+) efflux and Ca(2+) uptake. This chain is Defensin-like protein 2 (AFP2), found in Raphanus sativus (Radish).